We begin with the raw amino-acid sequence, 81 residues long: Serine protease inhibitor Kazal-type 2 (81 aa).

Positions Met-1–Leu-21 are cleaved as a signal peptide. Positions Lys-27–Cys-81 constitute a Kazal-like domain. Disulfide bonds link Cys-33–Cys-63, Cys-41–Cys-60, and Cys-49–Cys-81.

More abundant in epididymis than in testis.

The protein localises to the secreted. Its subcellular location is the cytoplasmic vesicle. It localises to the secretory vesicle. It is found in the acrosome. In terms of biological role, strong inhibitor of acrosin in male and/or female genital tract. Also inhibits trypsin. Its function is as follows. As a strong inhibitor of acrosin, it is required for normal spermiogenesis. It probably hinders premature activation of proacrosin and other proteases, thus preventing the cascade of events leading to spermiogenesis defects. May be involved in the regulation of serine protease-dependent germ cell apoptosis. It also inhibits trypsin. The polypeptide is Serine protease inhibitor Kazal-type 2 (SPINK2) (Macaca fascicularis (Crab-eating macaque)).